The following is a 102-amino-acid chain: MQKIRKGDKVVMLAGKDKGRTGEVVQVMPKEDRAVVRGVNVVKRHQRQTQTQEAGIINKEASVHLSNVAIVDKDGKPTRVGFKVVDGKKVRVAKRSGEVIDG.

The protein belongs to the universal ribosomal protein uL24 family. In terms of assembly, part of the 50S ribosomal subunit.

One of two assembly initiator proteins, it binds directly to the 5'-end of the 23S rRNA, where it nucleates assembly of the 50S subunit. Functionally, one of the proteins that surrounds the polypeptide exit tunnel on the outside of the subunit. The sequence is that of Large ribosomal subunit protein uL24 from Rhizobium leguminosarum bv. trifolii (strain WSM2304).